The sequence spans 202 residues: Adenosylcobalamin/alpha-ribazole phosphatase (202 aa).

The Tele-phosphohistidine intermediate role is filled by His-8. The active-site Proton donor/acceptor is Glu-81.

Belongs to the phosphoglycerate mutase family.

It catalyses the reaction adenosylcob(III)alamin 5'-phosphate + H2O = adenosylcob(III)alamin + phosphate. It carries out the reaction alpha-ribazole 5'-phosphate + H2O = alpha-ribazole + phosphate. It participates in nucleoside biosynthesis; alpha-ribazole biosynthesis; alpha-ribazole from 5,6-dimethylbenzimidazole: step 2/2. Catalyzes the conversion of adenosylcobalamin 5'-phosphate to adenosylcobalamin (vitamin B12); involved in the assembly of the nucleotide loop of cobalamin. Also catalyzes the hydrolysis of the phospho group from alpha-ribazole 5'-phosphate to form alpha-ribazole. The polypeptide is Adenosylcobalamin/alpha-ribazole phosphatase (cobC) (Salmonella typhi).